The chain runs to 123 residues: Large ribosomal subunit protein uL14 (123 aa).

The protein belongs to the universal ribosomal protein uL14 family. As to quaternary structure, part of the 50S ribosomal subunit. Forms a cluster with proteins L3 and L19. In the 70S ribosome, L14 and L19 interact and together make contacts with the 16S rRNA in bridges B5 and B8.

Functionally, binds to 23S rRNA. Forms part of two intersubunit bridges in the 70S ribosome. This chain is Large ribosomal subunit protein uL14, found in Actinobacillus pleuropneumoniae serotype 7 (strain AP76).